Reading from the N-terminus, the 181-residue chain is Probable calcium-binding protein CML43 (181 aa).

EF-hand domains lie at 24–59, 107–142, and 145–180; these read LNAL…LGLD, SPES…LGLP, and GEIE…VVVP. The Ca(2+) site is built by aspartate 37, asparagine 39, aspartate 41, glutamate 48, aspartate 120, aspartate 122, aspartate 124, glutamate 131, aspartate 158, asparagine 160, aspartate 162, arginine 164, and glutamate 169.

Expressed specifically in roots.

In terms of biological role, calcium-binding protein that may mediate calcium-dependent signal during plant defense response. The protein is Probable calcium-binding protein CML43 (CML43) of Arabidopsis thaliana (Mouse-ear cress).